Here is a 92-residue protein sequence, read N- to C-terminus: Small ribosomal subunit protein bS20 (92 aa).

The segment at 1–22 is disordered; it reads MANSPQSKKRARQAEARAAVNK.

It belongs to the bacterial ribosomal protein bS20 family.

Its function is as follows. Binds directly to 16S ribosomal RNA. The polypeptide is Small ribosomal subunit protein bS20 (Cereibacter sphaeroides (strain ATCC 17029 / ATH 2.4.9) (Rhodobacter sphaeroides)).